A 951-amino-acid chain; its full sequence is WD repeat-containing and planar cell polarity effector protein fritz (951 aa).

WD repeat units follow at residues 304 to 343 (PMGA…TKYA) and 345 to 384 (QIEI…IGHQ). Polar residues-rich tracts occupy residues 709 to 720 (TLKSNSSLQQAP), 757 to 771 (IPDQ…STMP), and 818 to 828 (SILSNPANPAP). Disordered regions lie at residues 709 to 776 (TLKS…SPPP), 816 to 883 (TASI…AARH), and 903 to 951 (EYLK…FGVV). Residues 930-942 (SSKGGNSSSSSSS) show a composition bias toward low complexity.

Belongs to the WD repeat fritz family.

The protein localises to the cell membrane. It is found in the cytoplasm. The protein resides in the cytoskeleton. Its subcellular location is the cilium axoneme. In terms of biological role, probable effector of the planar cell polarity signaling pathway which regulates the septin cytoskeleton in both ciliogenesis and collective cell movements. Functions cell autonomously to regulate wing cell hair polarity and number. The polypeptide is WD repeat-containing and planar cell polarity effector protein fritz (frtz) (Drosophila melanogaster (Fruit fly)).